Consider the following 63-residue polypeptide: Large ribosomal subunit protein uL29 (63 aa).

Belongs to the universal ribosomal protein uL29 family.

This chain is Large ribosomal subunit protein uL29, found in Azotobacter vinelandii (strain DJ / ATCC BAA-1303).